A 243-amino-acid chain; its full sequence is Segregation and condensation protein A (243 aa).

The protein belongs to the ScpA family. In terms of assembly, component of a cohesin-like complex composed of ScpA, ScpB and the Smc homodimer, in which ScpA and ScpB bind to the head domain of Smc. The presence of the three proteins is required for the association of the complex with DNA.

It localises to the cytoplasm. In terms of biological role, participates in chromosomal partition during cell division. May act via the formation of a condensin-like complex containing Smc and ScpB that pull DNA away from mid-cell into both cell halves. The sequence is that of Segregation and condensation protein A from Staphylococcus aureus (strain NCTC 8325 / PS 47).